The chain runs to 341 residues: L-threonine 3-dehydrogenase (341 aa).

Cys-38 serves as a coordination point for Zn(2+). Active-site charge relay system residues include Thr-40 and His-43. Residues His-63, Glu-64, Cys-93, Cys-96, Cys-99, and Cys-107 each contribute to the Zn(2+) site. NAD(+) contacts are provided by residues Ile-175, Asp-195, Arg-200, 262-264 (LGI), and 286-287 (IY).

This sequence belongs to the zinc-containing alcohol dehydrogenase family. As to quaternary structure, homotetramer. Zn(2+) serves as cofactor.

The protein resides in the cytoplasm. It carries out the reaction L-threonine + NAD(+) = (2S)-2-amino-3-oxobutanoate + NADH + H(+). The protein operates within amino-acid degradation; L-threonine degradation via oxydo-reductase pathway; glycine from L-threonine: step 1/2. Functionally, catalyzes the NAD(+)-dependent oxidation of L-threonine to 2-amino-3-ketobutyrate. The polypeptide is L-threonine 3-dehydrogenase (Shewanella frigidimarina (strain NCIMB 400)).